The primary structure comprises 585 residues: Acetolactate synthase large subunit (585 aa).

Glu60 is a binding site for thiamine diphosphate. FAD contacts are provided by residues Arg162, 272 to 293 (HGTA…LGAR), and 315 to 334 (DIDP…IISD). Positions 407–486 (QHQMWAAQFL…IKIFIINNQW (80 aa)) are thiamine pyrophosphate binding. Asp457 and Asn484 together coordinate Mg(2+).

Belongs to the TPP enzyme family. Dimer of large and small chains. Mg(2+) is required as a cofactor. Requires thiamine diphosphate as cofactor.

The protein localises to the plastid. It localises to the chloroplast. The enzyme catalyses 2 pyruvate + H(+) = (2S)-2-acetolactate + CO2. Its pathway is amino-acid biosynthesis; L-isoleucine biosynthesis; L-isoleucine from 2-oxobutanoate: step 1/4. It participates in amino-acid biosynthesis; L-valine biosynthesis; L-valine from pyruvate: step 1/4. This is Acetolactate synthase large subunit (ilvB) from Cyanidium caldarium (Red alga).